A 173-amino-acid chain; its full sequence is Large ribosomal subunit protein uL10 (173 aa).

Belongs to the universal ribosomal protein uL10 family. In terms of assembly, part of the ribosomal stalk of the 50S ribosomal subunit. The N-terminus interacts with L11 and the large rRNA to form the base of the stalk. The C-terminus forms an elongated spine to which L12 dimers bind in a sequential fashion forming a multimeric L10(L12)X complex.

Forms part of the ribosomal stalk, playing a central role in the interaction of the ribosome with GTP-bound translation factors. The protein is Large ribosomal subunit protein uL10 of Chlorobium phaeobacteroides (strain BS1).